The chain runs to 351 residues: Mitogen-activated protein kinase 2 (351 aa).

One can recognise a Protein kinase domain in the interval 16–304 (YEILDVIGEG…AEEALQHNYL (289 aa)). ATP-binding positions include 22–30 (IGEGAYGIV) and Lys-45. Residue Asp-140 is the Proton acceptor of the active site. The residue at position 176 (Thr-176) is a Phosphothreonine. The TXY signature appears at 176 to 178 (TEY). The residue at position 178 (Tyr-178) is a Phosphotyrosine.

It belongs to the protein kinase superfamily. CMGC Ser/Thr protein kinase family. MAP kinase subfamily. Mg(2+) serves as cofactor. Mn(2+) is required as a cofactor. Post-translationally, dually phosphorylated on Thr-176 and Tyr-178, which activates the enzyme.

Its subcellular location is the nucleus. The catalysed reaction is L-seryl-[protein] + ATP = O-phospho-L-seryl-[protein] + ADP + H(+). It catalyses the reaction L-threonyl-[protein] + ATP = O-phospho-L-threonyl-[protein] + ADP + H(+). Its activity is regulated as follows. Activated by tyrosine and threonine phosphorylation. Inhibited by the MEK inhibitor U0126 but not by the p38 inhibitor SB203580. Cobalt abolishes kinase activity, while calcium, copper and nickel have little effect on kinase activity. Functionally, serine-threonine protein kinase which may be involved in pheromone signaling. Functionally complements the MAPK pheromone signaling pathway in S.cerevisiae. This chain is Mitogen-activated protein kinase 2, found in Pneumocystis carinii.